The chain runs to 290 residues: Pyridoxal kinase PdxY (290 aa).

Residue serine 14 coordinates substrate. Residues aspartate 116 and glutamate 153 each contribute to the ATP site. Position 226 (aspartate 226) interacts with substrate.

Belongs to the pyridoxine kinase family. PdxY subfamily. Homodimer. Mg(2+) is required as a cofactor.

It catalyses the reaction pyridoxal + ATP = pyridoxal 5'-phosphate + ADP + H(+). Its pathway is cofactor metabolism; pyridoxal 5'-phosphate salvage; pyridoxal 5'-phosphate from pyridoxal: step 1/1. Its function is as follows. Pyridoxal kinase involved in the salvage pathway of pyridoxal 5'-phosphate (PLP). Catalyzes the phosphorylation of pyridoxal to PLP. The protein is Pyridoxal kinase PdxY of Rubrobacter xylanophilus (strain DSM 9941 / JCM 11954 / NBRC 16129 / PRD-1).